Reading from the N-terminus, the 261-residue chain is Cytochrome c oxidase subunit 3 (261 aa).

At 1–15 (MTHQTHAYHMVNPSP) the chain is on the mitochondrial matrix side. The chain crosses the membrane as a helical span at residues 16–34 (WPLTGALSALLMTSGLAMW). Residues 35–40 (FHFNST) are Mitochondrial intermembrane-facing. Residues 41–66 (ILLMIGLTTNTLTMYQWWRDVIREST) traverse the membrane as a helical segment. At 67–72 (FQGHHT) the chain is on the mitochondrial matrix side. A helical transmembrane segment spans residues 73–105 (PTVQKGLRYGMILFIISEVLFFTGFFWAFYHSS). The Mitochondrial intermembrane portion of the chain corresponds to 106–128 (LAPTPELGGCWPPTGIHPLNPLE). Residues 129–152 (VPLLNTSVLLASGVSITWAHHSLM) traverse the membrane as a helical segment. Over 153 to 155 (EGN) the chain is Mitochondrial matrix. A helical transmembrane segment spans residues 156–183 (RYPMLQALFITIALGVYFTLLQASEYYE). Residues 184-190 (APFTISD) are Mitochondrial intermembrane-facing. Residues 191 to 223 (GVYGSTFFVATGFHGLHVIIGSTFLIVCFFRQL) form a helical membrane-spanning segment. The Mitochondrial matrix segment spans residues 224 to 232 (KFHFTSNHH). The chain crosses the membrane as a helical span at residues 233 to 256 (FGFEAAAWYWHFVDVVWLFLYVSI). Residues 257-261 (YWWGS) lie on the Mitochondrial intermembrane side of the membrane.

The protein belongs to the cytochrome c oxidase subunit 3 family. In terms of assembly, component of the cytochrome c oxidase (complex IV, CIV), a multisubunit enzyme composed of 14 subunits. The complex is composed of a catalytic core of 3 subunits MT-CO1, MT-CO2 and MT-CO3, encoded in the mitochondrial DNA, and 11 supernumerary subunits COX4I, COX5A, COX5B, COX6A, COX6B, COX6C, COX7A, COX7B, COX7C, COX8 and NDUFA4, which are encoded in the nuclear genome. The complex exists as a monomer or a dimer and forms supercomplexes (SCs) in the inner mitochondrial membrane with NADH-ubiquinone oxidoreductase (complex I, CI) and ubiquinol-cytochrome c oxidoreductase (cytochrome b-c1 complex, complex III, CIII), resulting in different assemblies (supercomplex SCI(1)III(2)IV(1) and megacomplex MCI(2)III(2)IV(2)).

The protein localises to the mitochondrion inner membrane. It carries out the reaction 4 Fe(II)-[cytochrome c] + O2 + 8 H(+)(in) = 4 Fe(III)-[cytochrome c] + 2 H2O + 4 H(+)(out). Functionally, component of the cytochrome c oxidase, the last enzyme in the mitochondrial electron transport chain which drives oxidative phosphorylation. The respiratory chain contains 3 multisubunit complexes succinate dehydrogenase (complex II, CII), ubiquinol-cytochrome c oxidoreductase (cytochrome b-c1 complex, complex III, CIII) and cytochrome c oxidase (complex IV, CIV), that cooperate to transfer electrons derived from NADH and succinate to molecular oxygen, creating an electrochemical gradient over the inner membrane that drives transmembrane transport and the ATP synthase. Cytochrome c oxidase is the component of the respiratory chain that catalyzes the reduction of oxygen to water. Electrons originating from reduced cytochrome c in the intermembrane space (IMS) are transferred via the dinuclear copper A center (CU(A)) of subunit 2 and heme A of subunit 1 to the active site in subunit 1, a binuclear center (BNC) formed by heme A3 and copper B (CU(B)). The BNC reduces molecular oxygen to 2 water molecules using 4 electrons from cytochrome c in the IMS and 4 protons from the mitochondrial matrix. In Raphicerus campestris (Steenbok), this protein is Cytochrome c oxidase subunit 3 (MT-CO3).